Reading from the N-terminus, the 386-residue chain is HORMA domain-containing protein 1 (386 aa).

Residues 24-224 (TQSLILVKRL…TPFHVLKVKV (201 aa)) form the HORMA domain. Disordered stretches follow at residues 237 to 274 (SIFKKQASKQPQTDEEKPDLSINDDLAQDNNGDRKRDD) and 289 to 386 (EDGN…TPLN). The segment covering 289 to 313 (EDGNLQSDDSQNSALADSQEKTSQA) has biased composition (polar residues). Over residues 329-343 (QKPDLELKNQKESAR) the composition is skewed to basic and acidic residues.

The protein resides in the nucleus. The protein localises to the chromosome. Functionally, plays a key role in meiotic progression by ensuring that sufficient numbers of processed DNA double-strand breaks (DSBs) are available for successful homology search, promoting synaptonemal-complex formation independently and playing key role in the male mid-pachytene checkpoint and the female meiotic prophase checkpoint. The protein is HORMA domain-containing protein 1 (hormad1) of Xenopus laevis (African clawed frog).